The following is a 186-amino-acid chain: uncharacterized protein (186 aa).

The tract at residues 121-146 is disordered; it reads TSPLLKKNKPSSDQDDTSKQSFDQDE.

The protein belongs to the chlamydial CPn_0422/CT_273/TC_0545 family.

This is an uncharacterized protein from Chlamydia muridarum (strain MoPn / Nigg).